We begin with the raw amino-acid sequence, 302 residues long: N-acetyl-D-glucosamine kinase (302 aa).

Residues 4–11 (GFDVGGTK) and 133–140 (GFGGGLVY) contribute to the ATP site. The Zn(2+) site is built by His-157, Cys-177, Cys-179, and Cys-184.

It belongs to the ROK (NagC/XylR) family. NagK subfamily.

The enzyme catalyses N-acetyl-D-glucosamine + ATP = N-acetyl-D-glucosamine 6-phosphate + ADP + H(+). The protein operates within cell wall biogenesis; peptidoglycan recycling. In terms of biological role, catalyzes the phosphorylation of N-acetyl-D-glucosamine (GlcNAc) derived from cell-wall degradation, yielding GlcNAc-6-P. This Vibrio cholerae serotype O1 (strain ATCC 39315 / El Tor Inaba N16961) protein is N-acetyl-D-glucosamine kinase.